The chain runs to 280 residues: Protein FLOURY 1-like (280 aa).

Residues 22–42 traverse the membrane as a helical segment; that stretch reads GFGFGIFVIGCSSQFFNLVFL. The segment at 153-187 is disordered; the sequence is VALSETELDEKNHHGEEEESEDEEESQSQNDEDQL. Acidic residues predominate over residues 169 to 187; the sequence is EEESEDEEESQSQNDEDQL. One can recognise a GTD-binding domain in the interval 188 to 280; it reads LDVITLRTMV…LDDDEDKIQM (93 aa).

The protein resides in the membrane. The chain is Protein FLOURY 1-like from Arabidopsis thaliana (Mouse-ear cress).